A 359-amino-acid chain; its full sequence is Fe-S cluster assembly protein DRE2 (359 aa).

Residues 1–148 (MASTGRVLLL…KPDVAAQQAV (148 aa)) are N-terminal SAM-like domain. Disordered regions lie at residues 97–116 (NKAWGLRSSGNNSDDDNDND) and 149–210 (PLKL…PSGV). The linker stretch occupies residues 149–246 (PLKLGRRKKE…EDELLGEDDM (98 aa)). Residues 152–164 (LGRRKKEKERRHP) are compositionally biased toward basic residues. The span at 167–183 (NDVTNGKVNAPSSNGVN) shows a compositional bias: polar residues. The segment covering 184-200 (ASTSTATATATTTTTTT) has biased composition (low complexity). 4 residues coordinate [2Fe-2S] cluster: C256, C267, C270, and C272. The segment at 256–272 (CRPKPGKRRRACKDCSC) is fe-S binding site A. Residues C322, C325, C333, and C336 each contribute to the [4Fe-4S] cluster site. Short sequence motifs (cx2C motif) lie at residues 322-325 (CGNC) and 333-336 (CDGC). Residues 322-336 (CGNCSLGDAFRCDGC) form a fe-S binding site B region.

The protein belongs to the anamorsin family. As to quaternary structure, monomer. Interacts with TAH18. Interacts with MIA40. The cofactor is [2Fe-2S] cluster. It depends on [4Fe-4S] cluster as a cofactor.

The protein localises to the cytoplasm. The protein resides in the mitochondrion intermembrane space. Component of the cytosolic iron-sulfur (Fe-S) protein assembly (CIA) machinery required for the maturation of extramitochondrial Fe-S proteins. Part of an electron transfer chain functioning in an early step of cytosolic Fe-S biogenesis, facilitating the de novo assembly of a [4Fe-4S] cluster on the scaffold complex CFD1-NBP35. Electrons are transferred to DRE2 from NADPH via the FAD- and FMN-containing protein TAH18. TAH18-DRE2 are also required for the assembly of the diferric tyrosyl radical cofactor of ribonucleotide reductase (RNR), probably by providing electrons for reduction during radical cofactor maturation in the catalytic small subunit RNR2. In Blastomyces gilchristii (strain SLH14081) (Blastomyces dermatitidis), this protein is Fe-S cluster assembly protein DRE2.